Consider the following 439-residue polypeptide: Secreted aspartic protease FUS4 (439 aa).

The signal sequence occupies residues 1-22 (MLTIATLHVALQVFGAFSPSHA). In terms of domain architecture, Peptidase A1 spans 49–434 (YLFNVTVGSP…NFEDRSFGLA (386 aa)). Asn-52 and Asn-61 each carry an N-linked (GlcNAc...) asparagine glycan. Asp-67 is an active-site residue. N-linked (GlcNAc...) asparagine glycosylation is found at Asn-101, Asn-107, and Asn-123. Residue Asp-296 is part of the active site. A disulfide bridge connects residues Cys-352 and Cys-390.

Belongs to the peptidase A1 family.

It is found in the secreted. Its function is as follows. Secreted aspartic protease; part of the gene cluster that mediates the biosynthesis of the mycotoxin fusarin C. Within the cluster, FUS1, FUS2, FUS8 and FUS9 are sufficient for fusarin production. The other FUS cluster members are not essential for fusarin C biosynthesis. This is Secreted aspartic protease FUS4 from Gibberella moniliformis (strain M3125 / FGSC 7600) (Maize ear and stalk rot fungus).